Consider the following 300-residue polypeptide: Ferredoxin/F(420)H(2)-dependent CoB-CoM heterodisulfide reductase subunit B (300 aa).

This sequence belongs to the HdrB family. The ferredoxin/F(420)H(2)-dependent CoB-CoM heterodisulfide reductase is composed of three subunits; HdrA2, HdrB2 and HdrC2. [4Fe-4S] cluster serves as cofactor.

It is found in the cytoplasm. The enzyme catalyses coenzyme B + coenzyme M + 2 oxidized [2Fe-2S]-[ferredoxin] = coenzyme M-coenzyme B heterodisulfide + 2 reduced [2Fe-2S]-[ferredoxin] + 2 H(+). It carries out the reaction coenzyme B + 2 oxidized coenzyme F420-(gamma-L-Glu)(n) + coenzyme M + 2 reduced [2Fe-2S]-[ferredoxin] + 4 H(+) = coenzyme M-coenzyme B heterodisulfide + 2 reduced coenzyme F420-(gamma-L-Glu)(n) + 2 oxidized [2Fe-2S]-[ferredoxin]. It functions in the pathway cofactor metabolism; coenzyme M-coenzyme B heterodisulfide reduction; coenzyme B and coenzyme M from coenzyme M-coenzyme B heterodisulfide: step 1/1. Part of a complex that catalyzes the reversible reduction of CoM-S-S-CoB to the thiol-coenzymes H-S-CoM (coenzyme M) and H-S-CoB (coenzyme B). Catalyzes the transfer of electrons from ferredoxin to CoM-S-S-CoB during methanogenesis from acetate. Electrons transfer from ferredoxin to CoM-S-S-CoB via HdrA2, HdrC2 and HdrB2. In addition, the complex can use electron bifurcation to direct electron pairs from reduced coenzyme F420 towards the reduction of both ferredoxin and CoB-CoM heterodisulfide. This activity may take place during Fe(III)-dependent anaerobic methane oxidation. This chain is Ferredoxin/F(420)H(2)-dependent CoB-CoM heterodisulfide reductase subunit B, found in Methanosarcina acetivorans (strain ATCC 35395 / DSM 2834 / JCM 12185 / C2A).